Reading from the N-terminus, the 24-residue chain is Conotoxin PIVE (24 aa).

Disulfide bonds link C2-C10, C3-C15, and C13-C19. K24 bears the Lysine amide mark.

Belongs to the conotoxin A superfamily. In terms of tissue distribution, expressed by the venom duct.

Its subcellular location is the secreted. Functionally, probable neurotoxin with ion channel inhibitor activity. In vivo, elicits dose-dependently excitatory activity upon injection into fish. Its action is slowly reversible. The protein is Conotoxin PIVE of Conus purpurascens (Purple cone).